A 1087-amino-acid polypeptide reads, in one-letter code: Exportin-7 (1087 aa).

Residue Ala-2 is modified to N-acetylalanine. In terms of domain architecture, Importin N-terminal spans 30–96 (AEKALVEFTN…RNYVLNYLAT (67 aa)). At Ser-570 the chain carries Phosphoserine.

Belongs to the exportin family. As to quaternary structure, binds to nucleoporins. Found in a complex with XPO7, EIF4A1, ARHGAP1, VPS26A, VPS29, VPS35 and SFN. Interacts with ARHGAP1 and SFN. Interacts with Ran and cargo proteins in a GTP-dependent manner. As to expression, highly expressed in testis and spleen, moderate in kidney and liver and low in heart, brain, lung and skeletal muscle.

The protein localises to the cytoplasm. The protein resides in the nucleus. Functionally, mediates the nuclear export of proteins (cargos) with broad substrate specificity. In the nucleus binds cooperatively to its cargo and to the GTPase Ran in its active GTP-bound form. Docking of this trimeric complex to the nuclear pore complex (NPC) is mediated through binding to nucleoporins. Upon transit of a nuclear export complex into the cytoplasm, disassembling of the complex and hydrolysis of Ran-GTP to Ran-GDP (induced by RANBP1 and RANGAP1, respectively) cause release of the cargo from the export receptor. XPO7 then return to the nuclear compartment and mediate another round of transport. The directionality of nuclear export is thought to be conferred by an asymmetric distribution of the GTP- and GDP-bound forms of Ran between the cytoplasm and nucleus. The polypeptide is Exportin-7 (Xpo7) (Mus musculus (Mouse)).